A 582-amino-acid chain; its full sequence is Guanine nucleotide-binding protein-like NSN1 (582 aa).

Residues 1–46 (MVKRSKKSKSKRVTLKQKHKVLKKVKEHHKKKAKDAKKLGLHRKPR) are compositionally biased toward basic residues. The disordered stretch occupies residues 1–58 (MVKRSKKSKSKRVTLKQKHKVLKKVKEHHKKKAKDAKKLGLHRKPRVEKDPGIPNDWP). Positions 2-49 (VKRSKKSKSKRVTLKQKHKVLKKVKEHHKKKAKDAKKLGLHRKPRVEK) are basic. Short sequence motifs (nuclear localization signal) lie at residues 5-12 (SKKSKSKR), 22-29 (LKKVKEHH), and 69-76 (VRRARALE). Residues 15 to 94 (LKQKHKVLKK…RKERAKKRKL (80 aa)) adopt a coiled-coil conformation. The CP-type G domain maps to 127–311 (YKELVKVIEL…LLDCPGVVML (185 aa)). The short motif at 145–149 (DARDP) is the DARXP motif element. The interval 175-178 (NKID) is G4. GTP is bound at residue 175–178 (NKID). The interval 202 to 204 (KCS) is G5. Residues 260–267 (GLPNVGKS) are G1. 263–268 (NVGKSS) is a GTP binding site. Positions 281-456 (VGATPGLTRS…NEFNPVIIPS (176 aa)) are intermediate. The tract at residues 286–290 (GLTRS) is G2. GTP-binding positions include 304–307 (DCPG) and Gly-307. A G3 region spans residues 304 to 307 (DCPG). The interval 463–551 (DETMIEDESK…EEDLMDGDYD (89 aa)) is acidic. The disordered stretch occupies residues 469 to 545 (DESKTQTEEE…KKAGADEEDL (77 aa)). Residues 476 to 496 (EEEAEHESDDDESMGGEEEEE) are compositionally biased toward acidic residues. Positions 497-506 (AGKTKEKSET) are enriched in basic and acidic residues. Positions 515–537 (AAESMLNTKKQKAEKKKRKKAKK) form a coiled coil. Residues 522–529 (TKKQKAEK) carry the Nuclear localization signal 4 motif. Residues 523–537 (KKQKAEKKKRKKAKK) show a composition bias toward basic residues.

This sequence belongs to the TRAFAC class YlqF/YawG GTPase family. As to quaternary structure, interacts with EBP2 and PES. As to expression, mostly expressed in flowers, siliques and inflorescence apex, and, to a lower extent, in stems and leaves.

It localises to the nucleus. Its subcellular location is the nucleolus. Functionally, involved in the differentiation of epidermal cells, probably via the regulation of the expression of meristem-related genes (e.g. CLV3, STM, KNAT1, CUC2 and AG) and of leaf polarity-related genes (e.g. YAB5, FIL, AS2, PHB and PHV). May play a role in regulating cellular proliferation. Necessary for flower development, probably by preventing apical dominance through the down-regulation of AG expression. Required for embryogenesis, leaf and cotyledon development, as well as for leaf polarity establishment. Plays an important role in plant growth and senescence by modulating ribosome biogenesis in nucleolus. Possesses GTPAse activity in vitro. Possesses RNA binding activity in vitro. Associates with ribosomes. This Arabidopsis thaliana (Mouse-ear cress) protein is Guanine nucleotide-binding protein-like NSN1.